The sequence spans 270 residues: dTDP-6-deoxy-L-talose 4-dehydrogenase (NAD(+)) (270 aa).

Residues 11–12 (YI), 50–51 (DI), 72–76 (LAWQA), asparagine 87, threonine 112, tyrosine 135, and lysine 139 each bind NAD(+). Positions 112 and 135 each coordinate substrate. The active-site Proton acceptor is the tyrosine 135.

This sequence belongs to the NAD(P)-dependent epimerase/dehydratase family.

It carries out the reaction dTDP-6-deoxy-beta-L-talose + NAD(+) = dTDP-4-dehydro-beta-L-rhamnose + NADH + H(+). It participates in bacterial outer membrane biogenesis; LPS O-antigen biosynthesis. Catalyzes the reduction of dTDP-6-deoxy-L-lyxo-4-hexulose to dTDP-6-deoxy-L-talose. The protein is dTDP-6-deoxy-L-talose 4-dehydrogenase (NAD(+)) (tll) of Aggregatibacter actinomycetemcomitans (Actinobacillus actinomycetemcomitans).